The following is a 187-amino-acid chain: Elongation factor P (187 aa).

This sequence belongs to the elongation factor P family.

The protein localises to the cytoplasm. It participates in protein biosynthesis; polypeptide chain elongation. In terms of biological role, involved in peptide bond synthesis. Stimulates efficient translation and peptide-bond synthesis on native or reconstituted 70S ribosomes in vitro. Probably functions indirectly by altering the affinity of the ribosome for aminoacyl-tRNA, thus increasing their reactivity as acceptors for peptidyl transferase. The chain is Elongation factor P from Mycolicibacterium smegmatis (strain ATCC 700084 / mc(2)155) (Mycobacterium smegmatis).